The sequence spans 1014 residues: Isoleucine--tRNA ligase (1014 aa).

Residues 48–58 (PTANGRPGIHH) carry the 'HIGH' region motif. Residues 628 to 632 (KMSKS) carry the 'KMSKS' region motif. Lysine 631 contacts ATP.

The protein belongs to the class-I aminoacyl-tRNA synthetase family. IleS type 2 subfamily. Monomer. The cofactor is Zn(2+).

The protein resides in the cytoplasm. The catalysed reaction is tRNA(Ile) + L-isoleucine + ATP = L-isoleucyl-tRNA(Ile) + AMP + diphosphate. Functionally, catalyzes the attachment of isoleucine to tRNA(Ile). As IleRS can inadvertently accommodate and process structurally similar amino acids such as valine, to avoid such errors it has two additional distinct tRNA(Ile)-dependent editing activities. One activity is designated as 'pretransfer' editing and involves the hydrolysis of activated Val-AMP. The other activity is designated 'posttransfer' editing and involves deacylation of mischarged Val-tRNA(Ile). The sequence is that of Isoleucine--tRNA ligase from Dehalococcoides mccartyi (strain CBDB1).